The primary structure comprises 61 residues: MAVNVQQYLNKEYEVECDGQMVRLKPVKAWVLQPKGRKGVVIGLFKCPNGKTLRKAIGKIE.

Belongs to the Cren7 family. Monomer. Post-translationally, methylated at multiple sites, to varying extents.

It is found in the chromosome. Its subcellular location is the cytoplasm. Functionally, a chromatin protein, binds double-stranded DNA without sequence specificity. Constrains negative DNA supercoils. This is Chromatin protein Cren7 from Caldivirga maquilingensis (strain ATCC 700844 / DSM 13496 / JCM 10307 / IC-167).